Consider the following 525-residue polypeptide: Averantin hydroxylase (525 aa).

A helical membrane pass occupies residues 36 to 56 (VLATFVAGIGALLLWTLTTVF). The N-linked (GlcNAc...) asparagine glycan is linked to Asn-315. Cys-462 is a binding site for heme.

Belongs to the cytochrome P450 family. It depends on heme as a cofactor.

The protein localises to the membrane. It carries out the reaction (1'S)-averantin + reduced [NADPH--hemoprotein reductase] + O2 = (1'S,5'R)-5'-hydroxyaverantin + oxidized [NADPH--hemoprotein reductase] + H2O. The enzyme catalyses (1'S)-averantin + reduced [NADPH--hemoprotein reductase] + O2 = (1'S,5'S)-5'-hydroxyaverantin + oxidized [NADPH--hemoprotein reductase] + H2O + H(+). It participates in mycotoxin biosynthesis. In terms of biological role, averantin hydroxylase; part of the fragmented gene cluster that mediates the biosynthesis of dothistromin (DOTH), a polyketide toxin very similar in structure to the aflatoxin precursor, versicolorin B. The first step of the pathway is the conversion of acetate to norsolorinic acid (NOR) and requires the fatty acid synthase subunits hexA and hexB, as well as the polyketide synthase pksA. PksA combines a hexanoyl starter unit and 7 malonyl-CoA extender units to synthesize the precursor NOR. The hexanoyl starter unit is provided to the acyl-carrier protein (ACP) domain by the fungal fatty acid synthase hexA/hexB. The second step is the conversion of NOR to averantin (AVN) and requires the norsolorinic acid ketoreductase nor1, which catalyzes the dehydration of norsolorinic acid to form (1'S)-averantin. The cytochrome P450 monooxygenase avnA then catalyzes the hydroxylation of AVN to 5'hydroxyaverantin (HAVN). The next step is performed by adhA that transforms HAVN to averufin (AVF). Averufin might then be converted to hydroxyversicolorone by cypX and avfA. Hydroxyversicolorone is further converted versiconal hemiacetal acetate (VHA) by moxY. VHA is then the substrate for the versiconal hemiacetal acetate esterase est1 to yield versiconal (VAL). Versicolorin B synthase vbsA then converts VAL to versicolorin B (VERB) by closing the bisfuran ring. Then, the activity of the versicolorin B desaturase verB leads to versicolorin A (VERA). DotB, a predicted chloroperoxidase, may perform epoxidation of the A-ring of VERA. Alternatively, a cytochrome P450, such as cypX or avnA could catalyze this step. It is also possible that another, uncharacterized, cytochrome P450 enzyme is responsible for this step. Opening of the epoxide could potentially be achieved by the epoxide hydrolase epoA. However, epoA seems not to be required for DOTH biosynthesis, but other epoxide hydrolases may have the ability to complement this hydrolysis. Alternatively, opening of the epoxide ring could be achieved non-enzymatically. The next step is the deoxygenation of ring A to yield the 5,8-dihydroxyanthraquinone which is most likely catalyzed by the NADPH dehydrogenase encoded by ver1. The last stages of DOTH biosynthesis are proposed to involve hydroxylation of the bisfuran. OrdB and norB might have oxidative roles here. An alternative possibility is that cytochrome P450 monoogenases such as avnA and cypX might perform these steps in addition to previously proposed steps. This chain is Averantin hydroxylase, found in Dothistroma septosporum (strain NZE10 / CBS 128990) (Red band needle blight fungus).